The following is a 320-amino-acid chain: 3-ketodihydrosphingosine reductase TSC10 (320 aa).

The Cytoplasmic segment spans residues 1-254 (MKFTLEDQVV…IIAKSLARGD (254 aa)). Leu-11 provides a ligand contact to NADP(+). Residues Gly-14, Ser-16, and Gly-18 each coordinate NADPH. The GXSXG signature appears at 14–18 (GGSQG). Leu-19 provides a ligand contact to NADP(+). Residues Arg-41, Arg-45, Asp-89, and Leu-90 each coordinate NADPH. NADP(+) is bound at residue Asp-89. Ser-166 acts as the Proton donor in catalysis. The NADP(+) site is built by Tyr-180, Lys-184, and Ser-213. The active-site Proton acceptor is the Tyr-180. Lys-184 serves as the catalytic Lowers pKa of active site Tyr. The chain crosses the membrane as a helical span at residues 255-275 (DDVFTDFVGWMIMGMDLGLTA). The Lumenal portion of the chain corresponds to 276–279 (KKSR). Residues 280–300 (FVPLQWIFGVLSNILVVPFYM) form a helical membrane-spanning segment. Over 301-320 (VGCSWYIRKWFRENDGKKAN) the chain is Cytoplasmic.

This sequence belongs to the short-chain dehydrogenases/reductases (SDR) family. In terms of assembly, dimer or tetramer.

The protein localises to the endoplasmic reticulum membrane. It catalyses the reaction sphinganine + NADP(+) = 3-oxosphinganine + NADPH + H(+). It participates in lipid metabolism; sphingolipid metabolism. In terms of biological role, catalyzes the reduction of 3'-oxosphinganine (3-ketodihydrosphingosine/KDS) to sphinganine (dihydrosphingosine/DHS), the second step of de novo sphingolipid biosynthesis. In Saccharomyces cerevisiae (strain ATCC 204508 / S288c) (Baker's yeast), this protein is 3-ketodihydrosphingosine reductase TSC10.